We begin with the raw amino-acid sequence, 89 residues long: UPF0147 protein STK_04605 (89 aa).

This sequence belongs to the UPF0147 family.

This chain is UPF0147 protein STK_04605, found in Sulfurisphaera tokodaii (strain DSM 16993 / JCM 10545 / NBRC 100140 / 7) (Sulfolobus tokodaii).